A 371-amino-acid chain; its full sequence is Probable L-aspartate decarboxylase (371 aa).

Lysine 232 is subject to N6-(pyridoxal phosphate)lysine.

This sequence belongs to the group II decarboxylase family. MfnA subfamily. Requires pyridoxal 5'-phosphate as cofactor.

It carries out the reaction L-aspartate + H(+) = beta-alanine + CO2. Its pathway is cofactor biosynthesis; coenzyme A biosynthesis. Catalyzes the decarboxylation of L-aspartate to produce beta-alanine. The polypeptide is Probable L-aspartate decarboxylase (Pyrococcus furiosus (strain ATCC 43587 / DSM 3638 / JCM 8422 / Vc1)).